We begin with the raw amino-acid sequence, 455 residues long: Beta-1,3-galactosyl-O-glycosyl-glycoprotein beta-1,6-N-acetylglucosaminyltransferase 4 (455 aa).

Residues 1-13 are Cytoplasmic-facing; it reads MKIFRCCFKYTLQ. A helical; Signal-anchor for type II membrane protein transmembrane segment spans residues 14-34; that stretch reads QKLFILLLTLWLFSLLKLLNV. At 35–455 the chain is on the lumenal side; sequence GRLLFPQRDI…TEGTRQSHTL (421 aa). A glycan (N-linked (GlcNAc...) asparagine) is linked at N73. Intrachain disulfides connect C74/C228, C162/C383, C183/C210, and C392/C424. N-linked (GlcNAc...) asparagine glycans are attached at residues N287 and N382.

It belongs to the glycosyltransferase 14 family.

The protein resides in the golgi apparatus membrane. It carries out the reaction a 3-O-[beta-D-galactosyl-(1-&gt;3)-N-acetyl-alpha-D-galactosaminyl]-L-seryl-[protein] + UDP-N-acetyl-alpha-D-glucosamine = 3-O-{beta-D-galactosyl-(1-&gt;3)-[N-acetyl-beta-D-glucosaminyl-(1-&gt;6)]-N-acetyl-alpha-D-galactosaminyl}-L-seryl-[protein] + UDP + H(+). It catalyses the reaction a 3-O-[beta-D-galactosyl-(1-&gt;3)-N-acetyl-alpha-D-galactosaminyl]-L-threonyl-[protein] + UDP-N-acetyl-alpha-D-glucosamine = a 3-O-{beta-D-galactosyl-(1-&gt;3)-[N-acetyl-beta-D-glucosaminyl-(1-&gt;6)]-N-acetyl-alpha-D-galactosaminyl}-L-threonyl-[protein] + UDP + H(+). It functions in the pathway protein modification; protein glycosylation. Its function is as follows. Glycosyltransferase that mediates core 2 O-glycan branching, an important step in mucin-type biosynthesis. Does not have core 4 O-glycan or I-branching enzyme activity. The sequence is that of Beta-1,3-galactosyl-O-glycosyl-glycoprotein beta-1,6-N-acetylglucosaminyltransferase 4 (Gcnt4) from Mus musculus (Mouse).